The primary structure comprises 606 residues: Zinc finger protein 214 (606 aa).

Residues 3–83 (VTFEDVTIIF…GAQMYENQNY (81 aa)) form the KRAB domain. The C2H2-type 1; degenerate zinc finger occupies 275–297 (YGCDEVDGNFHQSSGVHFHQRVH). Residues 303-325 (YSCNACGKSFSQISSLHNHQRVH) form a C2H2-type 2 zinc finger. The C2H2-type 3; degenerate zinc-finger motif lies at 330-352 (FYKIECDKDLSRNSLLHIHQRLH). 8 C2H2-type zinc fingers span residues 358 to 380 (FKCN…QRVH), 386 to 408 (YKCD…QLVH), 414 to 436 (YKCE…QRVH), 442 to 464 (YKCD…QRVH), 470 to 492 (YTCP…QRVH), 498 to 520 (YKCE…QRVH), 526 to 548 (YKCH…QRVH), and 554 to 576 (YQCA…QRVH).

The protein belongs to the krueppel C2H2-type zinc-finger protein family.

Its subcellular location is the nucleus. Its function is as follows. May be involved in transcriptional regulation. In Homo sapiens (Human), this protein is Zinc finger protein 214 (ZNF214).